We begin with the raw amino-acid sequence, 344 residues long: Phosphoribosylformylglycinamidine cyclo-ligase (344 aa).

It belongs to the AIR synthase family.

It localises to the cytoplasm. It catalyses the reaction 2-formamido-N(1)-(5-O-phospho-beta-D-ribosyl)acetamidine + ATP = 5-amino-1-(5-phospho-beta-D-ribosyl)imidazole + ADP + phosphate + H(+). The protein operates within purine metabolism; IMP biosynthesis via de novo pathway; 5-amino-1-(5-phospho-D-ribosyl)imidazole from N(2)-formyl-N(1)-(5-phospho-D-ribosyl)glycinamide: step 2/2. This Glaesserella parasuis serovar 5 (strain SH0165) (Haemophilus parasuis) protein is Phosphoribosylformylglycinamidine cyclo-ligase.